Consider the following 268-residue polypeptide: uncharacterized protein (268 aa).

The next 3 membrane-spanning stretches (helical) occupy residues 169–189, 190–210, and 225–245; these read AIIY…QGFA, GVKT…LWLL, and IFAG…LSVF.

The protein localises to the cell membrane. This is an uncharacterized protein from Bacillus subtilis (strain 168).